A 515-amino-acid polypeptide reads, in one-letter code: Meiotically up-regulated gene 68 protein (515 aa).

The segment at 165–204 (LHSIESERNESSLSLDSGESEKKSEEDNGNGEQNYIPEQY) is disordered.

Its function is as follows. Has a role in meiosis. This Schizosaccharomyces pombe (strain 972 / ATCC 24843) (Fission yeast) protein is Meiotically up-regulated gene 68 protein (mug68).